Here is a 495-residue protein sequence, read N- to C-terminus: BUB3-interacting and GLEBS motif-containing protein ZNF207 (495 aa).

Residues 1-92 (MGRKKKKQLK…EGIPEKDMDE (92 aa)) are microtubule-binding region. 2 C2H2-type zinc fingers span residues 11 to 34 (PWCWYCNRDFDDEKILIQHQKAKH) and 35 to 58 (FKCHICHKKLYTGPGLAIHCMQVH). Residues 99–111 (QKTQESQKKKQQD) show a composition bias toward basic and acidic residues. Disordered stretches follow at residues 99–161 (QKTQ…PGIP), 252–292 (PPAP…SNSE), and 316–372 (VGTD…ATLT). Over residues 112–121 (DSDEYDDDES) the composition is skewed to acidic residues. The span at 127–136 (FQPQPVQPQQ) shows a compositional bias: polar residues. The segment covering 142-161 (MAQPGLPPVPGAPGMPPGIP) has biased composition (pro residues). Composition is skewed to low complexity over residues 283 to 292 (SSSTASSNSE) and 326 to 372 (TPAA…ATLT). Residues 376–408 (ATSKLIHPDEDISLEERRAQLPKYQRNLPRPGQ) are GLEBS. The disordered stretch occupies residues 462 to 495 (PYGQGPPMVPPYQGGPPRPPMGMRPPVMSQGGRY). Over residues 464–484 (GQGPPMVPPYQGGPPRPPMGM) the composition is skewed to pro residues.

Interacts (via GLEBS region) with BUB3. As to expression, in day-13 embryo, strongly expressed in the nervous system (brain, spinal cord and dorsal root ganglia), with strong to weak expression in other regions. Continues to be strongly expressed in the neonatal brain while expression is weak in the brain and spinal cord of adult.

Its subcellular location is the nucleus. It localises to the chromosome. It is found in the centromere. The protein localises to the kinetochore. The protein resides in the cytoplasm. Its subcellular location is the cytoskeleton. It localises to the spindle. Functionally, kinetochore- and microtubule-binding protein that plays a key role in spindle assembly. ZNF207/BuGZ is mainly composed of disordered low-complexity regions and undergoes phase transition or coacervation to form temperature-dependent liquid droplets. Coacervation promotes microtubule bundling and concentrates tubulin, promoting microtubule polymerization and assembly of spindle and spindle matrix by concentrating its building blocks. Also acts as a regulator of mitotic chromosome alignment by mediating the stability and kinetochore loading of BUB3. Mechanisms by which BUB3 is protected are unclear: according to a first report, ZNF207/BuGZ may act by blocking ubiquitination and proteasomal degradation of BUB3. According to another report, the stabilization is independent of the proteasome. The polypeptide is BUB3-interacting and GLEBS motif-containing protein ZNF207 (Mus musculus (Mouse)).